A 205-amino-acid polypeptide reads, in one-letter code: Beta-crystallin B2 (205 aa).

A2 bears the N-acetylalanine mark. Residues 2–16 (ASDHQTQAGKPQPLN) are N-terminal arm. 2 Beta/gamma crystallin 'Greek key' domains span residues 17–56 (PKII…LVQA) and 57–101 (GPWV…RPIK). The tract at residues 102 to 106 (VDSQE) is connecting peptide. Beta/gamma crystallin 'Greek key' domains lie at 107-148 (HKII…RVQS) and 149-191 (GTWV…RRIR). Residues 193–205 (MQWHQRGAFHPTN) form a C-terminal arm region.

It belongs to the beta/gamma-crystallin family. As to quaternary structure, homo/heterodimer, or complexes of higher-order. The structure of beta-crystallin oligomers seems to be stabilized through interactions between the N-terminal arms.

In terms of biological role, crystallins are the dominant structural components of the vertebrate eye lens. The polypeptide is Beta-crystallin B2 (CRYBB2) (Oryctolagus cuniculus (Rabbit)).